The sequence spans 2233 residues: Acetyl-CoA carboxylase (2233 aa).

Residue S2 is modified to N-acetylserine. A Phosphoserine modification is found at S2. Residues 58-567 (VISKILIANN…TTGWLDDLIT (510 aa)) enclose the Biotin carboxylation domain. Positions 216–408 (KTGLVSVDDD…LPAAQLQIAM (193 aa)) constitute an ATP-grasp domain. Position 256–261 (256–261 (GGGGKG)) interacts with ATP. Mn(2+) is bound by residues E365, E379, and N381. Residue R383 is part of the active site. The Biotinyl-binding domain maps to 694 to 768 (LEVENDPTQL…VAGDIMAIMT (75 aa)). K735 carries the post-translational modification N6-biotinyllysine. Residues S790, S1148, S1157, and S1162 each carry the phosphoserine modification. The region spanning 1486-1822 (PYPVKEWLQP…KRNMPVPILE (337 aa)) is the CoA carboxyltransferase N-terminal domain. Residues 1486-2141 (PYPVKEWLQP…EEYLIKRLSH (656 aa)) form a carboxyltransferase region. 1627–1629 (ARI) serves as a coordination point for acetyl-CoA. R1731 contacts CoA. Residues 1826 to 2141 (TWDRPVDFTP…EEYLIKRLSH (316 aa)) enclose the CoA carboxyltransferase C-terminal domain. Acetyl-CoA is bound at residue G1998. K2034 and R2036 together coordinate CoA.

In terms of assembly, homodimer. The cofactor is biotin. Requires Mn(2+) as cofactor.

It is found in the cytoplasm. The protein localises to the endoplasmic reticulum membrane. It carries out the reaction hydrogencarbonate + acetyl-CoA + ATP = malonyl-CoA + ADP + phosphate + H(+). The catalysed reaction is N(6)-biotinyl-L-lysyl-[protein] + hydrogencarbonate + ATP = N(6)-carboxybiotinyl-L-lysyl-[protein] + ADP + phosphate + H(+). Its pathway is lipid metabolism; malonyl-CoA biosynthesis; malonyl-CoA from acetyl-CoA: step 1/1. Its activity is regulated as follows. By phosphorylation. The catalytic activity is inhibited by soraphen A, a polyketide isolated from the myxobacterium Sorangium cellulosum and a potent inhibitor of fungal growth. In terms of biological role, carries out three functions: biotin carboxyl carrier protein, biotin carboxylase and carboxyltransferase. Involved in the synthesis of very-long-chain fatty acid synthesis which is required to maintain a functional nuclear envelope. Required for acylation and vacuolar membrane association of VAC8 which is necessary to maintain a normal morphology of the vacuole. The chain is Acetyl-CoA carboxylase (ACC1) from Saccharomyces cerevisiae (strain ATCC 204508 / S288c) (Baker's yeast).